The following is a 270-amino-acid chain: Tryptophan synthase alpha chain (270 aa).

Catalysis depends on proton acceptor residues Glu57 and Asp68.

This sequence belongs to the TrpA family. As to quaternary structure, tetramer of two alpha and two beta chains.

It carries out the reaction (1S,2R)-1-C-(indol-3-yl)glycerol 3-phosphate + L-serine = D-glyceraldehyde 3-phosphate + L-tryptophan + H2O. It functions in the pathway amino-acid biosynthesis; L-tryptophan biosynthesis; L-tryptophan from chorismate: step 5/5. Its function is as follows. The alpha subunit is responsible for the aldol cleavage of indoleglycerol phosphate to indole and glyceraldehyde 3-phosphate. The polypeptide is Tryptophan synthase alpha chain (Mycobacterium bovis (strain ATCC BAA-935 / AF2122/97)).